We begin with the raw amino-acid sequence, 352 residues long: Quinolinate synthase (352 aa).

Residues H48 and S69 each coordinate iminosuccinate. Residue C114 participates in [4Fe-4S] cluster binding. Residues 140–142 (YAN) and S157 each bind iminosuccinate. [4Fe-4S] cluster is bound at residue C201. Iminosuccinate contacts are provided by residues 227-229 (HPE) and T244. Residue C298 participates in [4Fe-4S] cluster binding.

Belongs to the quinolinate synthase family. Type 1 subfamily. The cofactor is [4Fe-4S] cluster.

It localises to the cytoplasm. It carries out the reaction iminosuccinate + dihydroxyacetone phosphate = quinolinate + phosphate + 2 H2O + H(+). Its pathway is cofactor biosynthesis; NAD(+) biosynthesis; quinolinate from iminoaspartate: step 1/1. Its function is as follows. Catalyzes the condensation of iminoaspartate with dihydroxyacetone phosphate to form quinolinate. In Pseudomonas putida (strain ATCC 700007 / DSM 6899 / JCM 31910 / BCRC 17059 / LMG 24140 / F1), this protein is Quinolinate synthase.